Consider the following 270-residue polypeptide: ATP synthase subunit a (270 aa).

6 helical membrane-spanning segments follow: residues 27–47 (FWTFHVDTLAWSVVLGLVFIL), 90–110 (IAPLALTIFVWVLLMNLMDLI), 147–166 (VNMTFALSLGVFALMIFYSV), 182–202 (PFNTPWLYWFNFILELVSLIA), 211–231 (LFGNLYAGELIFILIAGTLGV), and 238–258 (FLWAAFHLLVIPLQAFIFMML).

This sequence belongs to the ATPase A chain family. F-type ATPases have 2 components, CF(1) - the catalytic core - and CF(0) - the membrane proton channel. CF(1) has five subunits: alpha(3), beta(3), gamma(1), delta(1), epsilon(1). CF(0) has three main subunits: a(1), b(2) and c(9-12). The alpha and beta chains form an alternating ring which encloses part of the gamma chain. CF(1) is attached to CF(0) by a central stalk formed by the gamma and epsilon chains, while a peripheral stalk is formed by the delta and b chains.

The protein localises to the cell inner membrane. Functionally, key component of the proton channel; it plays a direct role in the translocation of protons across the membrane. The polypeptide is ATP synthase subunit a (Pseudoalteromonas atlantica (strain T6c / ATCC BAA-1087)).